Consider the following 363-residue polypeptide: Cysteine proteinase 15A (363 aa).

Residues 1-18 (MDRRFLFALFLFAAVATA) form the signal peptide. The propeptide at 19–131 (VTDDTNNDDF…QKAPILPTTN (113 aa)) is activation peptide. Intrachain disulfides connect Cys153–Cys203 and Cys187–Cys236. The active site involves Cys156. The N-linked (GlcNAc...) asparagine glycan is linked to Asn249. Cys292 and Cys347 form a disulfide bridge. Residues His299 and Asn326 contribute to the active site.

It belongs to the peptidase C1 family.

This Pisum sativum (Garden pea) protein is Cysteine proteinase 15A.